The sequence spans 569 residues: MSSNGWLQIGLLLALVFLTIKPLGLYIACVFEGQRTFLSPILGPLERLLLRISGVDARREQGWLAYTLAMLAFNAAGFLALYGILRLQAYLPYNPQGFAGMTPDLAFNTAISFVTNTNWQAYSGEQSASHFSQMAGLAVQNFLSAATGIAIALAVTRAFARSAANTLGNFWVDMTRSTLYLLLPMSIVLALVFVWMGIPQTLDASVTATTLDGAQQTIALGPIASQEAIKQLGTNGGGFFNANAAHPFENPSAISDYFNILAMMSITMALIYAFGKMVGDLRQGWALIASVAVLLIAGIAAVYIAETAGNPIHLALGLDPSFGNMEGKEVRFGQAMSAAYTAITTGISNGGVNTMHGSLTPLGGLVPLFLIQLGEILPGGVGSGLYGLIVFCVLTVFVAGLMVGRTPEFLGKKIEAREMKFAMLAVLVLPFAILGFSAIAAVLPNALASLGNAGPHGLSEILYAYTSAAGNNGSAFAGLSANTAWYNTTLGISMALGRFAYAVPVLAIAGSLAAKTKGTASAGTFPTHTPLFVGLLVAIIIILGGLQYFPALALGPIAEHVGMLAGTLY.

10 helical membrane-spanning segments follow: residues leucine 11–phenylalanine 31, leucine 64–isoleucine 84, alanine 135–valine 155, leucine 179–proline 199, phenylalanine 258–valine 278, tryptophan 285–alanine 305, glycine 384–glycine 404, methionine 423–leucine 443, leucine 490–glycine 510, and leucine 531–alanine 551.

The protein belongs to the KdpA family. As to quaternary structure, the system is composed of three essential subunits: KdpA, KdpB and KdpC.

Its subcellular location is the cell inner membrane. Its function is as follows. Part of the high-affinity ATP-driven potassium transport (or Kdp) system, which catalyzes the hydrolysis of ATP coupled with the electrogenic transport of potassium into the cytoplasm. This subunit binds the periplasmic potassium ions and delivers the ions to the membrane domain of KdpB through an intramembrane tunnel. The sequence is that of Potassium-transporting ATPase potassium-binding subunit from Allorhizobium ampelinum (strain ATCC BAA-846 / DSM 112012 / S4) (Agrobacterium vitis (strain S4)).